The sequence spans 263 residues: 4-hydroxy-tetrahydrodipicolinate reductase (263 aa).

NAD(+) is bound by residues 7 to 12 (GASGRM) and aspartate 33. NADP(+) is bound at residue arginine 34. NAD(+)-binding positions include 96–98 (GTT) and 120–123 (APNM). The active-site Proton donor/acceptor is the histidine 153. Residue histidine 154 coordinates (S)-2,3,4,5-tetrahydrodipicolinate. Lysine 157 (proton donor) is an active-site residue. Residue 163–164 (GT) coordinates (S)-2,3,4,5-tetrahydrodipicolinate.

Belongs to the DapB family.

The protein localises to the cytoplasm. The catalysed reaction is (S)-2,3,4,5-tetrahydrodipicolinate + NAD(+) + H2O = (2S,4S)-4-hydroxy-2,3,4,5-tetrahydrodipicolinate + NADH + H(+). It carries out the reaction (S)-2,3,4,5-tetrahydrodipicolinate + NADP(+) + H2O = (2S,4S)-4-hydroxy-2,3,4,5-tetrahydrodipicolinate + NADPH + H(+). It participates in amino-acid biosynthesis; L-lysine biosynthesis via DAP pathway; (S)-tetrahydrodipicolinate from L-aspartate: step 4/4. Functionally, catalyzes the conversion of 4-hydroxy-tetrahydrodipicolinate (HTPA) to tetrahydrodipicolinate. The chain is 4-hydroxy-tetrahydrodipicolinate reductase from Ralstonia nicotianae (strain ATCC BAA-1114 / GMI1000) (Ralstonia solanacearum).